The primary structure comprises 338 residues: (-)-alpha-amorphene synthase ((2E,6E)-farnesyl diphosphate cyclizing) (338 aa).

The Mg(2+) site is built by D105 and E109. The DDXXE motif signature appears at 105–109 (DDRAE). R196 is a binding site for substrate. S246 provides a ligand contact to Mg(2+). Position 249 (K249) interacts with substrate. E250 is a Mg(2+) binding site. 327–328 (RY) provides a ligand contact to substrate.

This sequence belongs to the terpene synthase family. It depends on Mg(2+) as a cofactor.

The catalysed reaction is (2E,6E)-farnesyl diphosphate = (-)-alpha-amorphene + diphosphate. It participates in secondary metabolite biosynthesis; terpenoid biosynthesis. Functionally, catalyzes the conversion of (2E,6E)-farnesyl diphosphate (FPP) to yield the bicyclic sesquiterpene (1R,6S,7S)-(-)-alpha-amorphene via a probable 1,6-cyclization, which could involve the abstraction of the pyrophosphate from FPP to yield a (R)-bisabolyl cation. The only accepted substrate is (2E,6E)-farnesyl diphosphate (FPP). In Streptomyces viridochromogenes (strain DSM 40736 / JCM 4977 / BCRC 1201 / Tue 494), this protein is (-)-alpha-amorphene synthase ((2E,6E)-farnesyl diphosphate cyclizing).